Reading from the N-terminus, the 3227-residue chain is E3 ubiquitin-protein ligase ptr1 (3227 aa).

Disordered stretches follow at residues 1806-1836 (SGAA…PPDL), 1869-1894 (MEFE…VMYS), 1908-1929 (QDAS…GDVI), and 2577-2607 (ATTG…KDKK). Residues 1811–1823 (DSMGDQSLSSSSE) are compositionally biased toward low complexity. A compositionally biased stretch (acidic residues) spans 1883–1894 (VSEDDADDVMYS). Over residues 2577–2601 (ATTGYTNDQDSRGSTVPKQDPGTTA) the composition is skewed to polar residues. In terms of domain architecture, HECT spans 2891-3227 (DADEVKFSKL…NEGSEGFGFA (337 aa)). Cys3194 functions as the Glycyl thioester intermediate in the catalytic mechanism.

It belongs to the UPL family. TOM1/PTR1 subfamily.

It localises to the nucleus. It carries out the reaction S-ubiquitinyl-[E2 ubiquitin-conjugating enzyme]-L-cysteine + [acceptor protein]-L-lysine = [E2 ubiquitin-conjugating enzyme]-L-cysteine + N(6)-ubiquitinyl-[acceptor protein]-L-lysine.. It functions in the pathway protein modification; protein ubiquitination. Functionally, probable ubiquitin ligase protein involved in mRNA export. E3 ubiquitin ligase proteins mediate ubiquitination and subsequent proteasomal degradation of target proteins. Probably participates in mRNA export from the nucleus by regulating the transport of hnRNP proteins such as rae1. This Schizosaccharomyces pombe (strain 972 / ATCC 24843) (Fission yeast) protein is E3 ubiquitin-protein ligase ptr1 (ptr1).